The following is a 185-amino-acid chain: Meiotic expression up-regulated protein 31 (185 aa).

The chain is Meiotic expression up-regulated protein 31 (meu31) from Schizosaccharomyces pombe (strain 972 / ATCC 24843) (Fission yeast).